We begin with the raw amino-acid sequence, 161 residues long: F-box only protein 48 (161 aa).

The segment at 1–25 is disordered; the sequence is MKKTSKKNNNFKIPGTELNSADAER. The 48-residue stretch at 32-79 folds into the F-box domain; that stretch reads RNFVELLPLEVTYKIFSQLDIQSLCRASRTCTGWNCAIRNNDSLWKPH.

In Mus musculus (Mouse), this protein is F-box only protein 48 (Fbxo48).